A 506-amino-acid chain; its full sequence is Sucrose transport protein SUT3 (506 aa).

At 1 to 20 the chain is on the cytoplasmic side; it reads MAVDMELDGGGDGKGKAPPQ. Residues 21–41 form a helical membrane-spanning segment; it reads ISLSGLFLACMVAGGVQYGWA. Topologically, residues 42 to 54 are extracellular; sequence LQLSLLTPYIQTL. A helical transmembrane segment spans residues 55 to 75; that stretch reads GIPHALTSVMWLCGPIAGLIV. The Cytoplasmic segment spans residues 76–94; it reads QPCVGLYSDKCTSSLGRRR. Residues 95–115 traverse the membrane as a helical segment; sequence PFILTGCIIICISVIVIGFSS. The Extracellular segment spans residues 116-135; that stretch reads DIGYALGDATEDCKVYRGPR. The helical transmembrane segment at 136 to 156 threads the bilayer; the sequence is YHAAAAFILGFWLLDFSNNTV. Residues 157–171 lie on the Cytoplasmic side of the membrane; it reads QGPARALMADLSGRH. The chain crosses the membrane as a helical span at residues 172–192; it reads GPSAANAIFCSWMALGNILGY. At 193–220 the chain is on the extracellular side; the sequence is SSGSTNDWHKWFPFLMTRACCEACANLK. The helical transmembrane segment at 221-241 threads the bilayer; the sequence is AAFLVAVVFLGLSTAVTMVFA. The Cytoplasmic portion of the chain corresponds to 242–275; the sequence is REVALDPVAAAKRNEGEASGPLAVFKGMKNLPVG. Residues 276–296 traverse the membrane as a helical segment; sequence MPSVLIVTGLTWLSWFPFILF. Topologically, residues 297–327 are extracellular; the sequence is DTDWMGREIYHGRPDGSPAEVTAFQEGVRQG. A helical membrane pass occupies residues 328–348; sequence AFGLLLNSIVLGISSFLIEPM. At 349–355 the chain is on the cytoplasmic side; it reads CRRLGAR. The helical transmembrane segment at 356–376 threads the bilayer; the sequence is AVWVMSSAVVCVAMAAVSVLS. Residues 377 to 404 are Extracellular-facing; that stretch reads AWSLGDFGGSVQDAARAPAEEGGVRASA. The helical transmembrane segment at 405-425 threads the bilayer; sequence LALFVFLGLPFAVLCSVPFAV. Topologically, residues 426-441 are cytoplasmic; it reads TAQLTASRGGGQGLCT. A helical membrane pass occupies residues 442-462; that stretch reads GVLNISIVVPQMAIALGAGPW. The Extracellular portion of the chain corresponds to 463 to 470; it reads DELFGEGN. A helical transmembrane segment spans residues 471–491; the sequence is IPAFAMASVFAAAAAAAGVVL. Residues 492-506 are Cytoplasmic-facing; it reads LPKVSVRSVSMAGGH.

This sequence belongs to the glycoside-pentoside-hexuronide (GPH) cation symporter transporter (TC 2.A.2.4) family. As to quaternary structure, homodimer.

It localises to the cell membrane. Its pathway is glycan biosynthesis; sucrose metabolism. Responsible for the transport of sucrose into the cell, with the concomitant uptake of protons (symport system). May also transport other glucosides. The sequence is that of Sucrose transport protein SUT3 (SUT3) from Oryza sativa subsp. indica (Rice).